Here is a 565-residue protein sequence, read N- to C-terminus: Deformed epidermal autoregulatory factor 1 homolog (565 aa).

2 disordered regions span residues 34–62 (GGEA…ETPR) and 162–190 (GLKG…KGGT). A compositionally biased stretch (pro residues) spans 169 to 181 (PLTPGPQSPPTPL). Threonine 171 carries the phosphothreonine modification. Position 176 is a phosphoserine (serine 176). Threonine 179 carries the post-translational modification Phosphothreonine. Positions 193 to 273 (NWDPSVYDSE…QCLIQDGILN (81 aa)) constitute an SAND domain. The short motif at 301–316 (KRRKKENELPTTPVKK) is the Nuclear localization signal element. Residues 403–478 (IAPFPEAALP…QLKTLFEQAK (76 aa)) form an interaction with LMO4 region. Threonine 432 carries the phosphothreonine modification. At serine 448 the chain carries Phosphoserine. Residues cysteine 504, cysteine 507, cysteine 515, cysteine 518, cysteine 524, cysteine 528, histidine 536, and cysteine 540 each coordinate Zn(2+). An MYND-type zinc finger spans residues 504 to 540 (CVNCGREAMNECTGCHKVNYCSTFCQRKDWKDHQHIC).

As to quaternary structure, homodimer. Interacts with LMO4; LMO4 blocks export from nucleus. Interacts with LMO2 and CLIM2. May interact with the corepressors NCOR1 and NCRO2. Identified in a complex with XRCC5 and XRCC6. Interacts (via the SAND domain) with the DNA-PK complex subunit XRCC6; the interaction is direct and may be inhibited by DNA-binding. In terms of processing, may be phosphorylated by DNA-PK complex in a DNA independent manner (in vitro).

Its subcellular location is the nucleus. Its function is as follows. Transcription factor that binds to sequence with multiple copies of 5'-TTC[CG]G-3' present in its own promoter and that of the HNRPA2B1 gene. Down-regulates transcription of these genes. Binds to the retinoic acid response element (RARE) 5'-AGGGTTCACCGAAAGTTCA-3'. Activates the proenkephalin gene independently of promoter binding, probably through protein-protein interaction. Regulates epithelial cell proliferation and side-branching in the mammary gland. Required for neural tube closure and skeletal patterning. Controls the expression of peripheral tissue antigens in pancreatic lymph nodes. Transcriptional activator of EIF4G3. May also involved in behavior. The polypeptide is Deformed epidermal autoregulatory factor 1 homolog (DEAF1) (Pan troglodytes (Chimpanzee)).